Reading from the N-terminus, the 241-residue chain is 2-C-methyl-D-erythritol 4-phosphate cytidylyltransferase (241 aa).

This sequence belongs to the IspD/TarI cytidylyltransferase family. IspD subfamily.

It carries out the reaction 2-C-methyl-D-erythritol 4-phosphate + CTP + H(+) = 4-CDP-2-C-methyl-D-erythritol + diphosphate. The protein operates within isoprenoid biosynthesis; isopentenyl diphosphate biosynthesis via DXP pathway; isopentenyl diphosphate from 1-deoxy-D-xylulose 5-phosphate: step 2/6. Catalyzes the formation of 4-diphosphocytidyl-2-C-methyl-D-erythritol from CTP and 2-C-methyl-D-erythritol 4-phosphate (MEP). The chain is 2-C-methyl-D-erythritol 4-phosphate cytidylyltransferase from Shewanella denitrificans (strain OS217 / ATCC BAA-1090 / DSM 15013).